A 406-amino-acid polypeptide reads, in one-letter code: Lymphocyte transmembrane adapter 1 (406 aa).

The interval 1-25 is disordered; it reads MYTTPAPPEITRRSSEPSTQQGTLG. Topologically, residues 1 to 33 are extracellular; that stretch reads MYTTPAPPEITRRSSEPSTQQGTLGSLEGEKGH. The helical; Signal-anchor for type III membrane protein transmembrane segment at 34 to 54 threads the bilayer; it reads LLFPGFVVLVTIFLVVIVTCI. Topologically, residues 55–406 are cytoplasmic; the sequence is LWSRKKQKKR…LATETSGEEV (352 aa). Residues 109–131 form a disordered region; that stretch reads ESLLSRASDSPEPEVPQASGSLQ. Phosphotyrosine is present on tyrosine 184. Positions 219–258 are disordered; the sequence is AEGGHAGCGKATDRTGVWAPGLQGSNSLSEGDDSSQSSND. The segment covering 242-258 has biased composition (low complexity); the sequence is GSNSLSEGDDSSQSSND. A phosphotyrosine mark is found at tyrosine 259, tyrosine 285, and tyrosine 352. The interval 358–406 is disordered; it reads PELEGKDWKQGPGTWHPSDERTPSDQAGKFCEAVYPAGSLATETSGEEV.

As to quaternary structure, when phosphorylated, interacts with GRB2, PIK3R1 and GRAP2. In terms of processing, phosphorylated on tyrosines upon TCR or BCR activation; which leads to the recruitment of GRB2, PIK3R1 and GRAP2.

It is found in the cell membrane. Negatively regulates TCR (T-cell antigen receptor)-mediated signaling in T-cells and BCR (B-cell antigen receptor)-mediated signaling in B-cells. The sequence is that of Lymphocyte transmembrane adapter 1 (Lax1) from Rattus norvegicus (Rat).